The chain runs to 366 residues: Chaperone protein DnaJ (366 aa).

Positions 5–69 constitute a J domain; it reads DYYEVLGVSK…QKRAQYDQFG (65 aa). Residues 128–210 form a CR-type zinc finger; sequence GKELNVEIPV…CHGTGKVRKR (83 aa). Zn(2+)-binding residues include Cys-141, Cys-144, Cys-158, Cys-161, Cys-184, Cys-187, Cys-198, and Cys-201. CXXCXGXG motif repeat units follow at residues 141–148, 158–165, 184–191, and 198–205; these read CDTCHGSG, CKYCSGTG, CRHCSGTG, and CTTCHGTG.

It belongs to the DnaJ family. As to quaternary structure, homodimer. The cofactor is Zn(2+).

The protein resides in the cytoplasm. Functionally, participates actively in the response to hyperosmotic and heat shock by preventing the aggregation of stress-denatured proteins and by disaggregating proteins, also in an autonomous, DnaK-independent fashion. Unfolded proteins bind initially to DnaJ; upon interaction with the DnaJ-bound protein, DnaK hydrolyzes its bound ATP, resulting in the formation of a stable complex. GrpE releases ADP from DnaK; ATP binding to DnaK triggers the release of the substrate protein, thus completing the reaction cycle. Several rounds of ATP-dependent interactions between DnaJ, DnaK and GrpE are required for fully efficient folding. Also involved, together with DnaK and GrpE, in the DNA replication of plasmids through activation of initiation proteins. The protein is Chaperone protein DnaJ of Bacillus cytotoxicus (strain DSM 22905 / CIP 110041 / 391-98 / NVH 391-98).